We begin with the raw amino-acid sequence, 490 residues long: Bifunctional protein GlmU (490 aa).

The pyrophosphorylase stretch occupies residues methionine 1–arginine 241. Residues leucine 12 to glycine 15, lysine 26, glutamine 83, glycine 88 to threonine 89, serine 112 to aspartate 114, glycine 151, glutamate 166, asparagine 181, and asparagine 239 each bind UDP-N-acetyl-alpha-D-glucosamine. Position 114 (aspartate 114) interacts with Mg(2+). Asparagine 239 serves as a coordination point for Mg(2+). The interval valine 242–alanine 262 is linker. An N-acetyltransferase region spans residues glycine 263–glutamate 490. UDP-N-acetyl-alpha-D-glucosamine-binding residues include arginine 344 and lysine 362. Catalysis depends on histidine 374, which acts as the Proton acceptor. UDP-N-acetyl-alpha-D-glucosamine is bound by residues tyrosine 377 and asparagine 388. Acetyl-CoA contacts are provided by residues alanine 391, asparagine 397–tyrosine 398, serine 416, and alanine 434. The segment at arginine 462–glutamate 490 is disordered. The segment covering glycine 467–glutamate 490 has biased composition (low complexity).

In the N-terminal section; belongs to the N-acetylglucosamine-1-phosphate uridyltransferase family. It in the C-terminal section; belongs to the transferase hexapeptide repeat family. As to quaternary structure, homotrimer. The cofactor is Mg(2+).

The protein resides in the cytoplasm. It carries out the reaction alpha-D-glucosamine 1-phosphate + acetyl-CoA = N-acetyl-alpha-D-glucosamine 1-phosphate + CoA + H(+). It catalyses the reaction N-acetyl-alpha-D-glucosamine 1-phosphate + UTP + H(+) = UDP-N-acetyl-alpha-D-glucosamine + diphosphate. Its pathway is nucleotide-sugar biosynthesis; UDP-N-acetyl-alpha-D-glucosamine biosynthesis; N-acetyl-alpha-D-glucosamine 1-phosphate from alpha-D-glucosamine 6-phosphate (route II): step 2/2. The protein operates within nucleotide-sugar biosynthesis; UDP-N-acetyl-alpha-D-glucosamine biosynthesis; UDP-N-acetyl-alpha-D-glucosamine from N-acetyl-alpha-D-glucosamine 1-phosphate: step 1/1. It participates in bacterial outer membrane biogenesis; LPS lipid A biosynthesis. Catalyzes the last two sequential reactions in the de novo biosynthetic pathway for UDP-N-acetylglucosamine (UDP-GlcNAc). The C-terminal domain catalyzes the transfer of acetyl group from acetyl coenzyme A to glucosamine-1-phosphate (GlcN-1-P) to produce N-acetylglucosamine-1-phosphate (GlcNAc-1-P), which is converted into UDP-GlcNAc by the transfer of uridine 5-monophosphate (from uridine 5-triphosphate), a reaction catalyzed by the N-terminal domain. The protein is Bifunctional protein GlmU of Mycolicibacterium paratuberculosis (strain ATCC BAA-968 / K-10) (Mycobacterium paratuberculosis).